We begin with the raw amino-acid sequence, 396 residues long: 1-deoxy-D-xylulose 5-phosphate reductoisomerase (396 aa).

8 residues coordinate NADPH: threonine 10, glycine 11, serine 12, isoleucine 13, glycine 36, lysine 37, asparagine 38, and asparagine 124. Lysine 125 contacts 1-deoxy-D-xylulose 5-phosphate. Glutamate 126 contributes to the NADPH binding site. Aspartate 150 is a Mn(2+) binding site. Positions 151, 152, 186, and 209 each coordinate 1-deoxy-D-xylulose 5-phosphate. Glutamate 152 lines the Mn(2+) pocket. Glycine 215 contacts NADPH. Positions 222, 227, 228, and 231 each coordinate 1-deoxy-D-xylulose 5-phosphate. Glutamate 231 is a Mn(2+) binding site.

The protein belongs to the DXR family. Mg(2+) is required as a cofactor. Requires Mn(2+) as cofactor.

The catalysed reaction is 2-C-methyl-D-erythritol 4-phosphate + NADP(+) = 1-deoxy-D-xylulose 5-phosphate + NADPH + H(+). Its pathway is isoprenoid biosynthesis; isopentenyl diphosphate biosynthesis via DXP pathway; isopentenyl diphosphate from 1-deoxy-D-xylulose 5-phosphate: step 1/6. Its function is as follows. Catalyzes the NADPH-dependent rearrangement and reduction of 1-deoxy-D-xylulose-5-phosphate (DXP) to 2-C-methyl-D-erythritol 4-phosphate (MEP). This chain is 1-deoxy-D-xylulose 5-phosphate reductoisomerase, found in Actinobacillus pleuropneumoniae serotype 5b (strain L20).